Reading from the N-terminus, the 100-residue chain is Small ribosomal subunit protein uS14c (100 aa).

It belongs to the universal ribosomal protein uS14 family. Part of the 30S ribosomal subunit.

Its subcellular location is the plastid. It is found in the chloroplast. Binds 16S rRNA, required for the assembly of 30S particles. The protein is Small ribosomal subunit protein uS14c of Lepidium virginicum (Virginia pepperweed).